Reading from the N-terminus, the 245-residue chain is Exosome complex component RRP41 (245 aa).

The residue at position 2 (Ala-2) is an N-acetylalanine.

Belongs to the RNase PH family. Component of the RNA exosome core complex (Exo-9), composed of EXOSC1, EXOSC2, EXOSC3, EXOSC4, EXOSC5, EXOSC6, EXOSC7, EXOSC8 and EXOSC9; within the complex interacts with EXOSC2, EXOSC7 and EXOSC9. The catalytically inactive RNA exosome core complex (Exo-9) associates with the catalytic subunit EXOSC10/RRP6. Exo-9 may associate with DIS3 to form the nucleolar exosome complex, or DIS3L to form the cytoplasmic exosome complex. Exo-9 is formed by a hexameric base ring consisting of the heterodimers EXOSC4-EXOSC9, EXOSC5-EXOSC8 and EXOSC6-EXOSC7, and a cap ring consisting of EXOSC1, EXOSC2 and EXOSC3. The RNA exosome complex associates with cofactors C1D/RRP47, MPHOSPH6/MPP6 and MTREX/MTR4. Interacts with DDX60. Interacts with DIS3; the interaction is direct.

Its subcellular location is the cytoplasm. It localises to the nucleus. The protein resides in the nucleolus. It is found in the nucleoplasm. Its function is as follows. Non-catalytic component of the RNA exosome complex which has 3'-&gt;5' exoribonuclease activity and participates in a multitude of cellular RNA processing and degradation events. In the nucleus, the RNA exosome complex is involved in proper maturation of stable RNA species such as rRNA, snRNA and snoRNA, in the elimination of RNA processing by-products and non-coding 'pervasive' transcripts, such as antisense RNA species and promoter-upstream transcripts (PROMPTs), and of mRNAs with processing defects, thereby limiting or excluding their export to the cytoplasm. The RNA exosome may be involved in Ig class switch recombination (CSR) and/or Ig variable region somatic hypermutation (SHM) by targeting AICDA deamination activity to transcribed dsDNA substrates. In the cytoplasm, the RNA exosome complex is involved in general mRNA turnover and specifically degrades inherently unstable mRNAs containing AU-rich elements (AREs) within their 3' untranslated regions, and in RNA surveillance pathways, preventing translation of aberrant mRNAs. It seems to be involved in degradation of histone mRNA. The catalytic inactive RNA exosome core complex of 9 subunits (Exo-9) is proposed to play a pivotal role in the binding and presentation of RNA for ribonucleolysis, and to serve as a scaffold for the association with catalytic subunits and accessory proteins or complexes. EXOSC4 binds to ARE-containing RNAs. The polypeptide is Exosome complex component RRP41 (EXOSC4) (Homo sapiens (Human)).